The following is a 300-amino-acid chain: UDP-3-O-acyl-N-acetylglucosamine deacetylase (300 aa).

Zn(2+)-binding residues include His78, His237, and Asp241. His264 functions as the Proton donor in the catalytic mechanism.

Belongs to the LpxC family. Zn(2+) is required as a cofactor.

It carries out the reaction a UDP-3-O-[(3R)-3-hydroxyacyl]-N-acetyl-alpha-D-glucosamine + H2O = a UDP-3-O-[(3R)-3-hydroxyacyl]-alpha-D-glucosamine + acetate. It participates in glycolipid biosynthesis; lipid IV(A) biosynthesis; lipid IV(A) from (3R)-3-hydroxytetradecanoyl-[acyl-carrier-protein] and UDP-N-acetyl-alpha-D-glucosamine: step 2/6. Functionally, catalyzes the hydrolysis of UDP-3-O-myristoyl-N-acetylglucosamine to form UDP-3-O-myristoylglucosamine and acetate, the committed step in lipid A biosynthesis. The sequence is that of UDP-3-O-acyl-N-acetylglucosamine deacetylase from Acinetobacter baumannii (strain SDF).